We begin with the raw amino-acid sequence, 464 residues long: E3 ubiquitin-protein ligase TRAIP (464 aa).

The segment at 7 to 50 adopts an RING-type; atypical zinc-finger fold; the sequence is CTICSDFFDNARDVAAITCGHTFHQECLLQWFHSAPHRTCPQCR. Coiled coils occupy residues 142-186 and 236-277; these read LDKQ…MIRD and AQKA…LQKT. Residues 439–464 form a disordered region; it reads KRKKVSRPTACTSSLANQPRLEDFLK. The PIP-box signature appears at 456–464; it reads QPRLEDFLK.

It belongs to the TRAIP family.

Its subcellular location is the nucleus. The protein localises to the nucleoplasm. It is found in the nucleolus. The protein resides in the chromosome. It localises to the cytoplasm. It carries out the reaction S-ubiquitinyl-[E2 ubiquitin-conjugating enzyme]-L-cysteine + [acceptor protein]-L-lysine = [E2 ubiquitin-conjugating enzyme]-L-cysteine + N(6)-ubiquitinyl-[acceptor protein]-L-lysine.. It functions in the pathway protein modification; protein ubiquitination. E3 ubiquitin ligase required to protect genome stability in response to replication stress. Acts as a key regulator of interstrand cross-link repair, which takes place when both strands of duplex DNA are covalently tethered together, thereby blocking replication and transcription. Controls the choice between the two pathways of replication-coupled interstrand-cross-link repair by mediating ubiquitination of mcm7 subunit of the CMG helicase complex. Short ubiquitin chains on mcm7 promote recruitment of DNA glycosylase neil3. If the interstrand cross-link cannot be cleaved by neil3, the ubiquitin chains continue to grow on mcm7, promoting the unloading of the CMG helicase complex by the vcp/p97 ATPase, enabling the Fanconi anemia DNA repair pathway. Only catalyzes ubiquitination of mcm7 when forks converge. Also involved in the repair of covalent DNA-protein cross-links (DPCs) during DNA synthesis: promotes ubiquitination of DPCs, leading to their degradation by the proteasome. Also acts as a negative regulator of innate immune signaling by inhibiting activation of NF-kappa-B mediated by TNF. This chain is E3 ubiquitin-protein ligase TRAIP, found in Xenopus laevis (African clawed frog).